The sequence spans 1052 residues: MKLINIWLLLLVVLLCGKKHLGDRLGKKAFEKASCPSCSHLTLKVEFSSTVVEYEYIVAFNGYFTAKARNSFISSALKSSEVDNWRIIPRNNPSSDYPSDFEVIQIKEKQKAGLLTLEDHPNIKRVTPQRKVFRSLKFAESDPIVPCNETRWSQKWQSSRPLRRASLSLGSGFWHATGRHSSRRLLRAIPRQVAQTLQADVLWQMGYTGANVRVAVFDTGLSEKHPHFKNVKERTNWTNERTLDDGLGHGTFVAGVIASMRECQGFAPDAELHIFRVFTNNQVSYTSWFLDAFNYAILKKIDVLNLSIGGPDFMDHPFVDKVWELTANNVIMVSAIGNDGPLYGTLNNPADQMDVIGVGGIDFEDNIARFSSRGMTTWELPGGYGRVKPDIVTYGAGVRGSGVKGGCRALSGTSVASPVVAGAVTLLVSTVQKRELVNPASVKQALIASARRLPGVNMFEQGHGKLDLLRAYQILSSYKPQASLSPSYIDLTECPYMWPYCSQPIYYGGMPTIVNVTILNGMGVTGRIVDKPEWRPYLPQNGDNIEVAFSYSSVLWPWSGYLAISISVTKKAASWEGIAQGHIMITVASPAETEAKNGAEHTSTVKLPIKVKIIPTPPRSKRVLWDQYHNLRYPPGYFPRDNLRMKNDPLDWNGDHVHTNFRDMYQHLRSMGYFVEVLGAPFTCFDATQYGTLLMVDSEEEYFPEEIAKLRRDVDNGLSLVIFSDWYNTSVMRKVKFYDENTRQWWMPDTGGANIPALNELLSVWNMGFSDGLYEGEFALANHDMYYASGCSIAKFPEDGVVITQTFKDQGLEVLKQETAVVENVPILGLYQIPAEGGGRIVLYGDSNCLDDSHRQKDCFWLLDALLQYTSYGVTPPSLSHSGNRQRPPSGAGLAPPERMEGNHLHRYSKVLEAHLGDPKPRPLPACPHLSWAKPQPLNETAPSNLWKHQKLLSIDLDKVVLPNFRSNRPQVRPLSPGESGAWDIPGGIMPGRYNQEVGQTIPVFAFLGAMVALAFFVVQISKAKSRPKRRRPRAKRPQLTQQTHPPRTPSV.

Residues 1–17 (MKLINIWLLLLVVLLCG) form the signal peptide. Positions 18–186 (KKHLGDRLGK…TGRHSSRRLL (169 aa)) are excised as a propeptide. N-linked (GlcNAc...) asparagine glycosylation occurs at N148. Residue S168 is modified to Phosphoserine. At 187–999 (RAIPRQVAQT…MPGRYNQEVG (813 aa)) the chain is on the lumenal side. The 283-residue stretch at 190 to 472 (PRQVAQTLQA…HGKLDLLRAY (283 aa)) folds into the Peptidase S8 domain. D218 (charge relay system) is an active-site residue. N236 is a glycosylation site (N-linked (GlcNAc...) asparagine). H249 serves as the catalytic Charge relay system. N305 carries an N-linked (GlcNAc...) asparagine glycan. S414 acts as the Charge relay system in catalysis. N515 and N728 each carry an N-linked (GlcNAc...) asparagine glycan. The span at 877 to 887 (PSLSHSGNRQR) shows a compositional bias: polar residues. Residues 877–900 (PSLSHSGNRQRPPSGAGLAPPERM) are disordered. N939 is a glycosylation site (N-linked (GlcNAc...) asparagine). The helical transmembrane segment at 1000 to 1022 (QTIPVFAFLGAMVALAFFVVQIS) threads the bilayer. Residues 1023-1052 (KAKSRPKRRRPRAKRPQLTQQTHPPRTPSV) are Cytoplasmic-facing. The segment covering 1025–1037 (KSRPKRRRPRAKR) has biased composition (basic residues). Residues 1025 to 1052 (KSRPKRRRPRAKRPQLTQQTHPPRTPSV) are disordered.

The protein belongs to the peptidase S8 family. The cofactor is Ca(2+). In terms of processing, the 148 kDa zymogen is processed progressively into two membrane-bound 120 and 106 kDa forms in the endoplasmic reticulum, and late into a secreted 98 kDa form. The propeptide is autocatalytically removed through an intramolecular cleavage after Leu-186. Further cleavage generates 14, 10, and 8 kDa intermediates.

It is found in the endoplasmic reticulum membrane. Its subcellular location is the golgi apparatus membrane. The enzyme catalyses Processes precursors containing basic and hydrophobic/aliphatic residues at P4 and P2, respectively, with a relatively relaxed acceptance of amino acids at P1 and P3.. Inhibited by divalent copper and zinc ions, but not by nickel or cobalt. Inhibited by its prosegment, but not smaller fragments. Inhibited by 4-(2-aminoethyl)benzenesulfonyl fluoride (AEBSF), a serine protease inhibitor. In terms of biological role, serine protease that cleaves after hydrophobic or small residues, provided that Arg or Lys is in position P4: known substrates include SREBF1/SREBP1, SREBF2/SREBP2, BDNF, GNPTAB, ATF6, ATF6B and FAM20C. Cleaves substrates after Arg-Ser-Val-Leu (SREBP2), Arg-His-Leu-Leu (ATF6), Arg-Gly-Leu-Thr (BDNF) and its own propeptide after Arg-Arg-Leu-Leu. Catalyzes the first step in the proteolytic activation of the sterol regulatory element-binding proteins (SREBPs) SREBF1/SREBP1 and SREBF2/SREBP2. Also mediates the first step in the proteolytic activation of the cyclic AMP-dependent transcription factor ATF-6 (ATF6 and ATF6B). Mediates the protein cleavage of GNPTAB into subunit alpha and beta, thereby participating in biogenesis of lysosomes. Cleaves the propeptide from FAM20C which is required for FAM20C secretion from the Golgi apparatus membrane and for enhancement of FAM20C kinase activity, promoting osteoblast differentiation and biomineralization. Involved in the regulation of M6P-dependent Golgi-to-lysosome trafficking of lysosomal enzymes. It is required for the activation of CREB3L2/BBF2H7, a transcriptional activator of MIA3/TANGO and other genes controlling mega vesicle formation. Therefore, it plays a key role in the regulation of mega vesicle-mediated collagen trafficking. In astrocytes and osteoblasts, upon DNA damage and ER stress, mediates the first step of the regulated intramembrane proteolytic activation of the transcription factor CREB3L1, leading to the inhibition of cell-cycle progression. This Cricetulus griseus (Chinese hamster) protein is Membrane-bound transcription factor site-1 protease.